Consider the following 486-residue polypeptide: Protein nucleotidyltransferase YdiU (486 aa).

Residues glycine 90, glycine 92, arginine 93, lysine 113, aspartate 125, glycine 126, arginine 176, and arginine 183 each coordinate ATP. The active-site Proton acceptor is aspartate 252. Mg(2+) is bound by residues asparagine 253 and aspartate 262. Aspartate 262 is an ATP binding site.

The protein belongs to the SELO family. It depends on Mg(2+) as a cofactor. Mn(2+) is required as a cofactor.

It carries out the reaction L-seryl-[protein] + ATP = 3-O-(5'-adenylyl)-L-seryl-[protein] + diphosphate. It catalyses the reaction L-threonyl-[protein] + ATP = 3-O-(5'-adenylyl)-L-threonyl-[protein] + diphosphate. The enzyme catalyses L-tyrosyl-[protein] + ATP = O-(5'-adenylyl)-L-tyrosyl-[protein] + diphosphate. The catalysed reaction is L-histidyl-[protein] + UTP = N(tele)-(5'-uridylyl)-L-histidyl-[protein] + diphosphate. It carries out the reaction L-seryl-[protein] + UTP = O-(5'-uridylyl)-L-seryl-[protein] + diphosphate. It catalyses the reaction L-tyrosyl-[protein] + UTP = O-(5'-uridylyl)-L-tyrosyl-[protein] + diphosphate. Functionally, nucleotidyltransferase involved in the post-translational modification of proteins. It can catalyze the addition of adenosine monophosphate (AMP) or uridine monophosphate (UMP) to a protein, resulting in modifications known as AMPylation and UMPylation. This chain is Protein nucleotidyltransferase YdiU, found in Pseudomonas aeruginosa (strain LESB58).